The sequence spans 198 residues: Nudix hydrolase 21, chloroplastic (198 aa).

The transit peptide at 1–37 (MISLFISNFSNLSNLSPTFDNMNMNIPSKKIVPVPTP) directs the protein to the chloroplast. In terms of domain architecture, Nudix hydrolase spans 59 to 191 (GYRQVVGCVP…WMREALEAFI (133 aa)). The Nudix box motif lies at 98–119 (GGWEIDESIEEAALRETIEEAG). Mg(2+) is bound by residues E113 and E117.

Belongs to the Nudix hydrolase family. Mg(2+) is required as a cofactor. Requires Mn(2+) as cofactor. In terms of tissue distribution, expressed in roots, leaves, stems and inflorescences.

Its subcellular location is the plastid. It is found in the chloroplast. Probably mediates the hydrolysis of some nucleoside diphosphate derivatives. The chain is Nudix hydrolase 21, chloroplastic (NUDT21) from Arabidopsis thaliana (Mouse-ear cress).